The sequence spans 384 residues: Succinyl-diaminopimelate desuccinylase (384 aa).

His-71 is a binding site for Zn(2+). Residue Asp-73 is part of the active site. Residue Asp-104 participates in Zn(2+) binding. The active-site Proton acceptor is Glu-138. Residues Glu-139, Glu-167, and His-353 each contribute to the Zn(2+) site.

It belongs to the peptidase M20A family. DapE subfamily. As to quaternary structure, homodimer. Zn(2+) is required as a cofactor. Requires Co(2+) as cofactor.

It carries out the reaction N-succinyl-(2S,6S)-2,6-diaminopimelate + H2O = (2S,6S)-2,6-diaminopimelate + succinate. Its pathway is amino-acid biosynthesis; L-lysine biosynthesis via DAP pathway; LL-2,6-diaminopimelate from (S)-tetrahydrodipicolinate (succinylase route): step 3/3. Catalyzes the hydrolysis of N-succinyl-L,L-diaminopimelic acid (SDAP), forming succinate and LL-2,6-diaminopimelate (DAP), an intermediate involved in the bacterial biosynthesis of lysine and meso-diaminopimelic acid, an essential component of bacterial cell walls. This is Succinyl-diaminopimelate desuccinylase from Aromatoleum aromaticum (strain DSM 19018 / LMG 30748 / EbN1) (Azoarcus sp. (strain EbN1)).